The chain runs to 199 residues: UPF0462 protein C4orf33 homolog (199 aa).

This sequence belongs to the UPF0462 family.

The chain is UPF0462 protein C4orf33 homolog from Rattus norvegicus (Rat).